The following is a 258-amino-acid chain: Imidazole glycerol phosphate synthase subunit HisF (258 aa).

Residues aspartate 12 and aspartate 131 contribute to the active site.

This sequence belongs to the HisA/HisF family. Heterodimer of HisH and HisF.

The protein localises to the cytoplasm. It catalyses the reaction 5-[(5-phospho-1-deoxy-D-ribulos-1-ylimino)methylamino]-1-(5-phospho-beta-D-ribosyl)imidazole-4-carboxamide + L-glutamine = D-erythro-1-(imidazol-4-yl)glycerol 3-phosphate + 5-amino-1-(5-phospho-beta-D-ribosyl)imidazole-4-carboxamide + L-glutamate + H(+). It participates in amino-acid biosynthesis; L-histidine biosynthesis; L-histidine from 5-phospho-alpha-D-ribose 1-diphosphate: step 5/9. IGPS catalyzes the conversion of PRFAR and glutamine to IGP, AICAR and glutamate. The HisF subunit catalyzes the cyclization activity that produces IGP and AICAR from PRFAR using the ammonia provided by the HisH subunit. This Sinorhizobium medicae (strain WSM419) (Ensifer medicae) protein is Imidazole glycerol phosphate synthase subunit HisF.